Reading from the N-terminus, the 419-residue chain is UPF0229 protein TERTU_3150 (419 aa).

The segment at Ile63–Glu111 is disordered. Positions Asn83 to Glu92 are enriched in basic and acidic residues.

The protein belongs to the UPF0229 family.

In Teredinibacter turnerae (strain ATCC 39867 / T7901), this protein is UPF0229 protein TERTU_3150.